The chain runs to 251 residues: tRNA-cytidine(32) 2-sulfurtransferase 2 (251 aa).

The PP-loop motif signature appears at 33 to 38 (SGGKDS). Residues C108, C111, and C199 each coordinate [4Fe-4S] cluster.

Belongs to the TtcA family. Homodimer. Mg(2+) serves as cofactor. [4Fe-4S] cluster is required as a cofactor.

Its subcellular location is the cytoplasm. It catalyses the reaction cytidine(32) in tRNA + S-sulfanyl-L-cysteinyl-[cysteine desulfurase] + AH2 + ATP = 2-thiocytidine(32) in tRNA + L-cysteinyl-[cysteine desulfurase] + A + AMP + diphosphate + H(+). It functions in the pathway tRNA modification. Its function is as follows. Catalyzes the ATP-dependent 2-thiolation of cytidine in position 32 of tRNA, to form 2-thiocytidine (s(2)C32). The sulfur atoms are provided by the cysteine/cysteine desulfurase (IscS) system. This Francisella tularensis subsp. tularensis (strain FSC 198) protein is tRNA-cytidine(32) 2-sulfurtransferase 2.